A 597-amino-acid polypeptide reads, in one-letter code: Period protein homolog lin-42 (597 aa).

Residues 1-44 form a disordered region; sequence MEPAGHSSATHNIVVPNANPTQPQPLAPAMREEGATLSPPNTWS. Residues 155–223 enclose the PAS domain; that stretch reads LQASHVSSNF…VRQAHIDLHN (69 aa). Disordered regions lie at residues 313-335, 418-450, 473-509, and 555-597; these read PVPSTSRHSHHHHHSSLKDQNQG, KSQSRPESPAKQDEPFDEKKYPPQTPLTREALT, DDVPSSPPAKRTTPIHWTSSSQNHYRTMAPAPPPPPG, and DGLL…DSQN. A compositionally biased stretch (basic and acidic residues) spans 425–438; the sequence is SPAKQDEPFDEKKY. A compositionally biased stretch (polar residues) spans 487–497; the sequence is IHWTSSSQNHY. Residues 561–577 show a composition bias toward low complexity; it reads GATSTGGASPTSGTNSP.

The protein resides in the nucleus. It localises to the cytoplasm. Transcriptional repressor which interacts with the promoter region of target genes. Has a specific role in developmental timing where it regulates temporal expression of a number of miRNAs and mRNAs. Controls temporal cell fate transition during embryonic and early larval development by restricting the expression of specific miRNAs, including let-7, miR-48, lin-4, miR-35 and miR-58. Restricts the accumulation of lin-29 in the hypodermis to the larval L4 stage, thus controlling terminal differentiation of seam cells. Has a role in the miRNA-mediated specification of asymmetric gene expression patterns in gustatory neurons. May also regulate genes involved in other biological processes including transport, small molecule metabolism, and growth. Inhibits dauer formation, by antagonizing daf-12. Its function is as follows. Specifically required for maintaining the timing of larval development and molting cycle rhythms. The chain is Period protein homolog lin-42 from Caenorhabditis elegans.